A 456-amino-acid polypeptide reads, in one-letter code: Cysteine--tRNA ligase (456 aa).

Residue cysteine 28 coordinates Zn(2+). Positions 30 to 40 (ITVYDHCHLGH) match the 'HIGH' region motif. Zn(2+) contacts are provided by cysteine 209, histidine 234, and glutamate 238. The 'KMSKS' region motif lies at 266-270 (KMAKS). An ATP-binding site is contributed by lysine 269.

Belongs to the class-I aminoacyl-tRNA synthetase family. As to quaternary structure, monomer. The cofactor is Zn(2+).

The protein localises to the cytoplasm. It catalyses the reaction tRNA(Cys) + L-cysteine + ATP = L-cysteinyl-tRNA(Cys) + AMP + diphosphate. The protein is Cysteine--tRNA ligase of Legionella pneumophila (strain Paris).